We begin with the raw amino-acid sequence, 50 residues long: Parvalbumin (50 aa).

One can recognise an EF-hand domain in the interval K38–L50.

This sequence belongs to the parvalbumin family.

Its function is as follows. Probably regulates the activity of the caudal neurosecretory system. Binds two calcium ions. The polypeptide is Parvalbumin (Scyliorhinus canicula (Small-spotted catshark)).